We begin with the raw amino-acid sequence, 274 residues long: Eukaryotic translation initiation factor 3 subunit G-2 (274 aa).

The region spanning 194 to 272 (SAVRISNLSE…LILCVEWSKP (79 aa)) is the RRM domain.

It belongs to the eIF-3 subunit G family. In terms of assembly, component of the eukaryotic translation initiation factor 3 (eIF-3) complex. The eIF-3 complex interacts with pix.

The protein localises to the cytoplasm. RNA-binding component of the eukaryotic translation initiation factor 3 (eIF-3) complex, which is involved in protein synthesis of a specialized repertoire of mRNAs and, together with other initiation factors, stimulates binding of mRNA and methionyl-tRNAi to the 40S ribosome. The eIF-3 complex specifically targets and initiates translation of a subset of mRNAs involved in cell proliferation. This subunit can bind 18S rRNA. The chain is Eukaryotic translation initiation factor 3 subunit G-2 from Drosophila pseudoobscura pseudoobscura (Fruit fly).